The following is a 240-amino-acid chain: Ribosomal RNA small subunit methyltransferase G (240 aa).

Residues G77, F82, 128–129 (AE), and R148 contribute to the S-adenosyl-L-methionine site. Positions 217–240 (EKRSKTPKKYPRKAGTPNKSPLLK) are disordered.

Belongs to the methyltransferase superfamily. RNA methyltransferase RsmG family.

It localises to the cytoplasm. Its function is as follows. Specifically methylates the N7 position of guanine in position 535 of 16S rRNA. This is Ribosomal RNA small subunit methyltransferase G from Staphylococcus carnosus (strain TM300).